A 120-amino-acid polypeptide reads, in one-letter code: NAD(P)H-quinone oxidoreductase subunit 3, chloroplastic (120 aa).

A run of 3 helical transmembrane segments spans residues 9–29 (IFWAFLIISSVIPILAFLISG), 64–84 (MFALVFVVFDVETVFLYPWAM), and 88–108 (VLGVSVFIEALIFVLIPIVGS).

The protein belongs to the complex I subunit 3 family. As to quaternary structure, NDH is composed of at least 16 different subunits, 5 of which are encoded in the nucleus.

Its subcellular location is the plastid. It is found in the chloroplast thylakoid membrane. It catalyses the reaction a plastoquinone + NADH + (n+1) H(+)(in) = a plastoquinol + NAD(+) + n H(+)(out). The catalysed reaction is a plastoquinone + NADPH + (n+1) H(+)(in) = a plastoquinol + NADP(+) + n H(+)(out). Functionally, NDH shuttles electrons from NAD(P)H:plastoquinone, via FMN and iron-sulfur (Fe-S) centers, to quinones in the photosynthetic chain and possibly in a chloroplast respiratory chain. The immediate electron acceptor for the enzyme in this species is believed to be plastoquinone. Couples the redox reaction to proton translocation, and thus conserves the redox energy in a proton gradient. This Calycanthus floridus var. glaucus (Eastern sweetshrub) protein is NAD(P)H-quinone oxidoreductase subunit 3, chloroplastic.